Here is a 419-residue protein sequence, read N- to C-terminus: 26S proteasome regulatory subunit 8 homolog B (419 aa).

Residue glycine 202–threonine 209 coordinates ATP. Lysine 406 is covalently cross-linked (Glycyl lysine isopeptide (Lys-Gly) (interchain with G-Cter in ubiquitin)).

It belongs to the AAA ATPase family. As to quaternary structure, component of the 19S regulatory particle (RP/PA700) base subcomplex of the 26S proteasome. The 26S proteasome is composed of a core protease (CP), known as the 20S proteasome, capped at one or both ends by the 19S regulatory particle (RP/PA700). The RP/PA700 complex is composed of at least 17 different subunits in two subcomplexes, the base and the lid, which form the portions proximal and distal to the 20S proteolytic core, respectively.

It localises to the cytoplasm. The protein resides in the nucleus. In terms of biological role, the 26S proteasome is involved in the ATP-dependent degradation of ubiquitinated proteins. The regulatory (or ATPase) complex confers ATP dependency and substrate specificity to the 26S complex. This Arabidopsis thaliana (Mouse-ear cress) protein is 26S proteasome regulatory subunit 8 homolog B (RPT6B).